The primary structure comprises 436 residues: F-box/LRR-repeat protein 20 (436 aa).

The F-box domain occupies 22–68; the sequence is AVINKKLPKELLLRIFSFLDVVTLCRCAQVSRAWNVLALDGSNWQRI. LRR repeat units lie at residues 74-100, 101-126, 127-152, 153-178, 179-204, 205-230, 231-256, 257-282, 283-308, 309-334, 335-363, 364-388, and 389-414; these read QRDI…SLRG, CLGV…SLNG, CTKT…DLAS, CTSI…NISW, CDQV…FLKG, CTQL…NLQT, CLQI…CASG, CSNI…EVAR, CSQL…DLEE, CVQI…SLSH, CELI…ELDN, CPLI…ELYD, and CQQI…AYFA. A Phosphothreonine modification is found at T417. S421 is modified (phosphoserine).

Interacts with SKP1 and CUL1. In terms of tissue distribution, highly expressed in brain.

It localises to the cytoplasm. In terms of biological role, substrate-recognition component of the SCF (SKP1-CUL1-F-box protein)-type E3 ubiquitin ligase complex. Isoform 3 regulates neural transmission by binding and ubiquitinating RIMS1, a modulator of presynaptic plasticity. In Mus musculus (Mouse), this protein is F-box/LRR-repeat protein 20 (Fbxl20).